The chain runs to 167 residues: Phospholipase A2 (167 aa).

The N-terminal stretch at 1–18 is a signal peptide; sequence MQVVLGSLFLLLLSTSHG. Positions 19-33 are excised as a propeptide; that stretch reads WQIRDRIGDNELEER. Residues tryptophan 41, glycine 43, and glycine 45 each coordinate Ca(2+). Disulfide bonds link cysteine 42/cysteine 64, cysteine 63/cysteine 103, cysteine 70/cysteine 96, cysteine 94/cysteine 128, and cysteine 138/cysteine 146. Asparagine 46 carries an N-linked (GlcNAc...) asparagine glycan. Histidine 67 is a catalytic residue. Aspartate 68 is a binding site for Ca(2+). Aspartate 97 is a catalytic residue.

Belongs to the phospholipase A2 family. Group III subfamily. It depends on Ca(2+) as a cofactor. Post-translationally, N-glycosylated; contains mannose, N-acetylglucosamine and fucose alphal-6 and/or alphal-3 linked to the innermost N-acetylglucosamine. As to expression, expressed by the venom gland.

It is found in the secreted. The catalysed reaction is a 1,2-diacyl-sn-glycero-3-phosphocholine + H2O = a 1-acyl-sn-glycero-3-phosphocholine + a fatty acid + H(+). In terms of biological role, in vivo, intraplantar injection in mice cause spontaneous pain behaviors and paw swelling. PLA2 catalyzes the calcium-dependent hydrolysis of the 2-acyl groups in 3-sn-phosphoglycerides. This chain is Phospholipase A2, found in Apis mellifera (Honeybee).